The chain runs to 190 residues: Xanthine phosphoribosyltransferase (190 aa).

Xanthine contacts are provided by leucine 20 and asparagine 27. A 5-phospho-alpha-D-ribose 1-diphosphate-binding site is contributed by 128-132 (ANGKA). Lysine 156 is a xanthine binding site.

Belongs to the purine/pyrimidine phosphoribosyltransferase family. Xpt subfamily. In terms of assembly, homodimer.

The protein localises to the cytoplasm. The catalysed reaction is XMP + diphosphate = xanthine + 5-phospho-alpha-D-ribose 1-diphosphate. Its pathway is purine metabolism; XMP biosynthesis via salvage pathway; XMP from xanthine: step 1/1. Functionally, converts the preformed base xanthine, a product of nucleic acid breakdown, to xanthosine 5'-monophosphate (XMP), so it can be reused for RNA or DNA synthesis. The sequence is that of Xanthine phosphoribosyltransferase from Pseudomonas putida (strain ATCC 700007 / DSM 6899 / JCM 31910 / BCRC 17059 / LMG 24140 / F1).